The chain runs to 294 residues: uncharacterized protein (294 aa).

The disordered stretch occupies residues 259–294; it reads LNAPTPIPPPITSHAGQEEALKPQRASKGKKAKARK. Positions 283–294 are enriched in basic residues; the sequence is RASKGKKAKARK.

This is an uncharacterized protein from Homo sapiens (Human).